Consider the following 372-residue polypeptide: Prostaglandin E synthase 2 (372 aa).

The Lumenal portion of the chain corresponds to 1-54; it reads MAHAVRALWPHGRALAWRLGDRPALGLHAQSRAGFTGAAGGSGPAATARKGGPR. The helical transmembrane segment at 55-71 threads the bilayer; that stretch reads LLGAAALALGGALGLYH. At 72-372 the chain is on the cytoplasmic side; it reads TARWHLRAQD…VEKAIAEAPQ (301 aa). Residues 87–190 form the Glutaredoxin domain; that stretch reads SATQLSLSSR…DIITYYPPMK (104 aa). Residue S92 is modified to Phosphoserine. Glutathione-binding positions include V145 and 161 to 162; that span reads DS. Positions 259–372 constitute a GST C-terminal domain; it reads DYIVKEGNFG…VEKAIAEAPQ (114 aa).

Belongs to the GST superfamily. As to quaternary structure, may interact with CEBPB. Interacts with EXOSC10. Homodimer. Post-translationally, synthesized as a Golgi membrane-associated protein, and the proteolytic removal of the N-terminal hydrophobic domain leads to the formation of a mature cytosolic enzyme. As to expression, detected in heart (at protein level). Widely expressed. Expressed in heart &gt; kidney &gt; muscle &gt; testis &gt; endometrium = ovary &gt; myometrium = spleen = lung. In endometrium, it is mainly expressed in luminal epithelial cells followed by glandular epithelial cells, but expression is also present in stromal cells at a lower level.

It localises to the microsome membrane. The protein localises to the cytoplasm. It catalyses the reaction prostaglandin H2 = prostaglandin E2. The enzyme catalyses prostaglandin H2 = (12S)-hydroxy-(5Z,8E,10E)-heptadecatrienoate + malonaldehyde. The protein operates within lipid metabolism; prostaglandin biosynthesis. Isomerase activity is increased by sulfhydril compounds. Dithiothreitol (DTT) is most effective, followed by glutathione (GSH) and 2-mercaptoethanol. Its function is as follows. Isomerase that catalyzes the conversion of PGH2 into the more stable prostaglandin E2 (PGE2) (in vitro). The biological function and the GSH-dependent property of PTGES2 is still under debate. In vivo, PTGES2 could form a complex with GSH and heme and would not participate in PGE2 synthesis but would catalyze the degradation of prostaglandin E2 H2 (PGH2) to 12(S)-hydroxy-5(Z),8(E),10(E)-heptadecatrienoic acid (HHT) and malondialdehyde (MDA). The chain is Prostaglandin E synthase 2 (PTGES2) from Bos taurus (Bovine).